Here is a 132-residue protein sequence, read N- to C-terminus: Small ribosomal subunit protein uS8 (132 aa).

Belongs to the universal ribosomal protein uS8 family. As to quaternary structure, part of the 30S ribosomal subunit. Contacts proteins S5 and S12.

One of the primary rRNA binding proteins, it binds directly to 16S rRNA central domain where it helps coordinate assembly of the platform of the 30S subunit. The protein is Small ribosomal subunit protein uS8 of Ureaplasma urealyticum serovar 10 (strain ATCC 33699 / Western).